Here is a 653-residue protein sequence, read N- to C-terminus: Extracellular metalloproteinase (653 aa).

A signal peptide spans 1–19; it reads MRSFLLASLASLSVISVYG. A propeptide spanning residues 20-244 is cleaved from the precursor; sequence HPHARSTLTR…VHAVVDYSAD (225 aa). Asparagine 327, asparagine 336, and asparagine 412 each carry an N-linked (GlcNAc...) asparagine glycan. Position 429 (histidine 429) interacts with Zn(2+). The active site involves glutamate 430. A Zn(2+)-binding site is contributed by histidine 433. N-linked (GlcNAc...) asparagine glycans are attached at residues asparagine 636 and asparagine 637.

Belongs to the peptidase M36 family. Requires Zn(2+) as cofactor.

The protein localises to the secreted. Secreted metalloproteinase that allows assimilation of proteinaceous substrates. The protein is Extracellular metalloproteinase (MEP) of Pyrenophora tritici-repentis (strain Pt-1C-BFP) (Wheat tan spot fungus).